Consider the following 310-residue polypeptide: Tyrosine recombinase XerC (310 aa).

The Core-binding (CB) domain maps to 11-97 (NSLQKPLSRF…SLRSFFDFLV (87 aa)). The Tyr recombinase domain maps to 118 to 298 (PLPKNLDVDE…DFQHLAQAYD (181 aa)). Catalysis depends on residues Arg-157, Lys-181, His-250, Arg-253, and His-276. The active-site O-(3'-phospho-DNA)-tyrosine intermediate is the Tyr-285.

This sequence belongs to the 'phage' integrase family. XerC subfamily. In terms of assembly, forms a cyclic heterotetrameric complex composed of two molecules of XerC and two molecules of XerD.

Its subcellular location is the cytoplasm. In terms of biological role, site-specific tyrosine recombinase, which acts by catalyzing the cutting and rejoining of the recombining DNA molecules. The XerC-XerD complex is essential to convert dimers of the bacterial chromosome into monomers to permit their segregation at cell division. It also contributes to the segregational stability of plasmids. The chain is Tyrosine recombinase XerC from Vibrio atlanticus (strain LGP32) (Vibrio splendidus (strain Mel32)).